We begin with the raw amino-acid sequence, 355 residues long: DNA-directed RNA polymerase subunit alpha (355 aa).

Residues 1-248 (MYYDDGIPVF…EQLQPFISSD (248 aa)) are alpha N-terminal domain (alpha-NTD). Residues 267-355 (YDPILLRKVD…ELARQHTDED (89 aa)) form an alpha C-terminal domain (alpha-CTD) region.

The protein belongs to the RNA polymerase alpha chain family. Homodimer. The RNAP catalytic core consists of 2 alpha, 1 beta, 1 beta' and 1 omega subunit. When a sigma factor is associated with the core the holoenzyme is formed, which can initiate transcription.

It carries out the reaction RNA(n) + a ribonucleoside 5'-triphosphate = RNA(n+1) + diphosphate. Functionally, DNA-dependent RNA polymerase catalyzes the transcription of DNA into RNA using the four ribonucleoside triphosphates as substrates. This chain is DNA-directed RNA polymerase subunit alpha, found in Wolbachia sp. subsp. Brugia malayi (strain TRS).